A 336-amino-acid chain; its full sequence is Heme A synthase (336 aa).

8 helical membrane-spanning segments follow: residues 12-32 (LKLW…VGGL), 97-117 (LLAR…TLYF), 130-150 (IFFL…SGLI), 161-181 (SIHL…ILDI), 194-214 (LFLL…AFLS), 256-276 (FLHR…NFIY), 285-305 (YVLF…ITLI), and 310-330 (ITYA…YFLI). His258 contacts heme. His316 lines the heme pocket.

This sequence belongs to the COX15/CtaA family. Type 2 subfamily. As to quaternary structure, interacts with CtaB. Requires heme b as cofactor.

It localises to the cell membrane. It carries out the reaction Fe(II)-heme o + 2 A + H2O = Fe(II)-heme a + 2 AH2. The protein operates within porphyrin-containing compound metabolism; heme A biosynthesis; heme A from heme O: step 1/1. Catalyzes the conversion of heme O to heme A by two successive hydroxylations of the methyl group at C8. The first hydroxylation forms heme I, the second hydroxylation results in an unstable dihydroxymethyl group, which spontaneously dehydrates, resulting in the formyl group of heme A. This chain is Heme A synthase, found in Pelagibacter ubique (strain HTCC1062).